Here is a 224-residue protein sequence, read N- to C-terminus: UPF0758 protein PSPTO_0086 (224 aa).

An MPN domain is found at 102 to 224 (ALENPAQVRN…PLSMVEKGLM (123 aa)). The Zn(2+) site is built by His-173, His-175, and Asp-186. Residues 173–186 (HNHPSGITTPSRSD) carry the JAMM motif motif.

This sequence belongs to the UPF0758 family.

This Pseudomonas syringae pv. tomato (strain ATCC BAA-871 / DC3000) protein is UPF0758 protein PSPTO_0086.